The sequence spans 325 residues: NADH-quinone oxidoreductase subunit H (325 aa).

The next 8 membrane-spanning stretches (helical) occupy residues 11–31, 81–101, 114–134, 154–174, 186–206, 237–257, 265–285, and 304–324; these read ILLT…CGAF, VIFT…FAIV, IGIL…LFAG, LSYE…AGSF, VWNV…GVAV, FFVG…TLFF, LPPF…FILI, and ICLP…LWQA.

Belongs to the complex I subunit 1 family. NDH-1 is composed of 13 different subunits. Subunits NuoA, H, J, K, L, M, N constitute the membrane sector of the complex.

The protein localises to the cell inner membrane. It carries out the reaction a quinone + NADH + 5 H(+)(in) = a quinol + NAD(+) + 4 H(+)(out). NDH-1 shuttles electrons from NADH, via FMN and iron-sulfur (Fe-S) centers, to quinones in the respiratory chain. The immediate electron acceptor for the enzyme in this species is believed to be ubiquinone. Couples the redox reaction to proton translocation (for every two electrons transferred, four hydrogen ions are translocated across the cytoplasmic membrane), and thus conserves the redox energy in a proton gradient. This subunit may bind ubiquinone. The polypeptide is NADH-quinone oxidoreductase subunit H (Escherichia fergusonii (strain ATCC 35469 / DSM 13698 / CCUG 18766 / IAM 14443 / JCM 21226 / LMG 7866 / NBRC 102419 / NCTC 12128 / CDC 0568-73)).